Here is a 260-residue protein sequence, read N- to C-terminus: 5'-nucleotidase SurE (260 aa).

A divalent metal cation is bound by residues Asp-8, Asp-9, Ser-43, and Asn-96.

It belongs to the SurE nucleotidase family. Requires a divalent metal cation as cofactor.

Its subcellular location is the cytoplasm. It carries out the reaction a ribonucleoside 5'-phosphate + H2O = a ribonucleoside + phosphate. Its function is as follows. Nucleotidase that shows phosphatase activity on nucleoside 5'-monophosphates. The sequence is that of 5'-nucleotidase SurE from Ruegeria sp. (strain TM1040) (Silicibacter sp.).